A 283-amino-acid polypeptide reads, in one-letter code: Pantothenate synthetase (283 aa).

30–37 is a binding site for ATP; the sequence is MGNLHDGH. Histidine 37 acts as the Proton donor in catalysis. A (R)-pantoate-binding site is contributed by glutamine 61. Residue glutamine 61 participates in beta-alanine binding. An ATP-binding site is contributed by 149–152; it reads GEKD. Glutamine 155 lines the (R)-pantoate pocket. 186–189 is an ATP binding site; that stretch reads LSSR.

The protein belongs to the pantothenate synthetase family. Homodimer.

It is found in the cytoplasm. The enzyme catalyses (R)-pantoate + beta-alanine + ATP = (R)-pantothenate + AMP + diphosphate + H(+). The protein operates within cofactor biosynthesis; (R)-pantothenate biosynthesis; (R)-pantothenate from (R)-pantoate and beta-alanine: step 1/1. Catalyzes the condensation of pantoate with beta-alanine in an ATP-dependent reaction via a pantoyl-adenylate intermediate. The chain is Pantothenate synthetase from Escherichia coli O17:K52:H18 (strain UMN026 / ExPEC).